Consider the following 246-residue polypeptide: Proteasome subunit beta type-4 (246 aa).

A propeptide spanning residues 1 to 23 is cleaved from the precursor; sequence MTTFSVPIDNGDSMKIAEEESQR. Residue T24 is the Nucleophile of the active site.

It belongs to the peptidase T1B family. In terms of assembly, component of the 20S core complex of the 26S proteasome. The 26S proteasome is composed of a core protease (CP), known as the 20S proteasome, capped at one or both ends by the 19S regulatory particle (RP/PA700). The 20S proteasome core is composed of 28 subunits that are arranged in four stacked rings, resulting in a barrel-shaped structure. The two end rings are each formed by seven alpha subunits, and the two central rings are each formed by seven beta subunits. The catalytic chamber with the active sites is on the inside of the barrel. As to expression, ubiquitous low levels, higher expression in siliques and flowers.

It is found in the cytoplasm. Its subcellular location is the nucleus. Non-catalytic component of the proteasome, a multicatalytic proteinase complex which is characterized by its ability to cleave peptides with Arg, Phe, Tyr, Leu, and Glu adjacent to the leaving group at neutral or slightly basic pH. The proteasome has an ATP-dependent proteolytic activity. This Arabidopsis thaliana (Mouse-ear cress) protein is Proteasome subunit beta type-4 (PBG1).